A 199-amino-acid chain; its full sequence is Urease accessory protein UreG (199 aa).

Residue 8–15 participates in GTP binding; it reads GPVGSGKT.

Belongs to the SIMIBI class G3E GTPase family. UreG subfamily. As to quaternary structure, homodimer. UreH, UreF and UreG form a complex that acts as a GTP-hydrolysis-dependent molecular chaperone, activating the urease apoprotein by helping to assemble the nickel containing metallocenter of UreC. The UreE protein probably delivers the nickel.

The protein localises to the cytoplasm. Its function is as follows. Facilitates the functional incorporation of the urease nickel metallocenter. This process requires GTP hydrolysis, probably effectuated by UreG. This chain is Urease accessory protein UreG, found in Helicobacter pylori (strain G27).